Reading from the N-terminus, the 196-residue chain is Pyridoxal 5'-phosphate synthase subunit PdxT (196 aa).

46 to 48 (GES) is an L-glutamine binding site. Cysteine 78 acts as the Nucleophile in catalysis. L-glutamine contacts are provided by residues arginine 110 and 138-139 (IR). Residues histidine 174 and glutamate 176 each act as charge relay system in the active site.

The protein belongs to the glutaminase PdxT/SNO family. In terms of assembly, in the presence of PdxS, forms a dodecamer of heterodimers. Only shows activity in the heterodimer.

It catalyses the reaction aldehydo-D-ribose 5-phosphate + D-glyceraldehyde 3-phosphate + L-glutamine = pyridoxal 5'-phosphate + L-glutamate + phosphate + 3 H2O + H(+). The catalysed reaction is L-glutamine + H2O = L-glutamate + NH4(+). Its pathway is cofactor biosynthesis; pyridoxal 5'-phosphate biosynthesis. Its function is as follows. Catalyzes the hydrolysis of glutamine to glutamate and ammonia as part of the biosynthesis of pyridoxal 5'-phosphate. The resulting ammonia molecule is channeled to the active site of PdxS. The protein is Pyridoxal 5'-phosphate synthase subunit PdxT of Deinococcus radiodurans (strain ATCC 13939 / DSM 20539 / JCM 16871 / CCUG 27074 / LMG 4051 / NBRC 15346 / NCIMB 9279 / VKM B-1422 / R1).